Reading from the N-terminus, the 376-residue chain is UDP-N-acetylglucosamine--N-acetylmuramyl-(pentapeptide) pyrophosphoryl-undecaprenol N-acetylglucosamine transferase (376 aa).

Residues 11–13, N117, R160, S208, and Q310 each bind UDP-N-acetyl-alpha-D-glucosamine; that span reads TGG.

It belongs to the glycosyltransferase 28 family. MurG subfamily.

The protein localises to the cell inner membrane. It catalyses the reaction di-trans,octa-cis-undecaprenyl diphospho-N-acetyl-alpha-D-muramoyl-L-alanyl-D-glutamyl-meso-2,6-diaminopimeloyl-D-alanyl-D-alanine + UDP-N-acetyl-alpha-D-glucosamine = di-trans,octa-cis-undecaprenyl diphospho-[N-acetyl-alpha-D-glucosaminyl-(1-&gt;4)]-N-acetyl-alpha-D-muramoyl-L-alanyl-D-glutamyl-meso-2,6-diaminopimeloyl-D-alanyl-D-alanine + UDP + H(+). It participates in cell wall biogenesis; peptidoglycan biosynthesis. Cell wall formation. Catalyzes the transfer of a GlcNAc subunit on undecaprenyl-pyrophosphoryl-MurNAc-pentapeptide (lipid intermediate I) to form undecaprenyl-pyrophosphoryl-MurNAc-(pentapeptide)GlcNAc (lipid intermediate II). The polypeptide is UDP-N-acetylglucosamine--N-acetylmuramyl-(pentapeptide) pyrophosphoryl-undecaprenol N-acetylglucosamine transferase (Rickettsia conorii (strain ATCC VR-613 / Malish 7)).